The primary structure comprises 263 residues: Endonuclease 8 (263 aa).

Proline 2 serves as the catalytic Schiff-base intermediate with DNA. The Proton donor role is filled by glutamate 3. Lysine 53 (proton donor; for beta-elimination activity) is an active-site residue. DNA is bound by residues glutamine 70, arginine 125, and asparagine 169. An FPG-type zinc finger spans residues 229-263 (KVFHRDGERCERCGGIIEKTTLSSRPFYWCPGCQH). The active-site Proton donor; for delta-elimination activity is arginine 253.

The protein belongs to the FPG family. Zn(2+) serves as cofactor.

The enzyme catalyses 2'-deoxyribonucleotide-(2'-deoxyribose 5'-phosphate)-2'-deoxyribonucleotide-DNA = a 3'-end 2'-deoxyribonucleotide-(2,3-dehydro-2,3-deoxyribose 5'-phosphate)-DNA + a 5'-end 5'-phospho-2'-deoxyribonucleoside-DNA + H(+). Its function is as follows. Involved in base excision repair of DNA damaged by oxidation or by mutagenic agents. Acts as a DNA glycosylase that recognizes and removes damaged bases. Has a preference for oxidized pyrimidines, such as thymine glycol, 5,6-dihydrouracil and 5,6-dihydrothymine. Has AP (apurinic/apyrimidinic) lyase activity and introduces nicks in the DNA strand. Cleaves the DNA backbone by beta-delta elimination to generate a single-strand break at the site of the removed base with both 3'- and 5'-phosphates. In Klebsiella pneumoniae subsp. pneumoniae (strain ATCC 700721 / MGH 78578), this protein is Endonuclease 8.